The chain runs to 332 residues: Glycerol-3-phosphate dehydrogenase [NAD(P)+] (332 aa).

NADPH is bound by residues Ser-11, Phe-12, Lys-32, and Lys-106. Residues Lys-106, Gly-137, and Ser-139 each contribute to the sn-glycerol 3-phosphate site. Residue Ala-141 coordinates NADPH. Sn-glycerol 3-phosphate contacts are provided by Lys-192, Asp-245, Ser-255, Arg-256, and Asn-257. Lys-192 functions as the Proton acceptor in the catalytic mechanism. Arg-256 provides a ligand contact to NADPH. Residues Val-280 and Glu-282 each coordinate NADPH.

This sequence belongs to the NAD-dependent glycerol-3-phosphate dehydrogenase family.

The protein localises to the cytoplasm. It catalyses the reaction sn-glycerol 3-phosphate + NAD(+) = dihydroxyacetone phosphate + NADH + H(+). The catalysed reaction is sn-glycerol 3-phosphate + NADP(+) = dihydroxyacetone phosphate + NADPH + H(+). Its pathway is membrane lipid metabolism; glycerophospholipid metabolism. Its function is as follows. Catalyzes the reduction of the glycolytic intermediate dihydroxyacetone phosphate (DHAP) to sn-glycerol 3-phosphate (G3P), the key precursor for phospholipid synthesis. In Staphylococcus carnosus (strain TM300), this protein is Glycerol-3-phosphate dehydrogenase [NAD(P)+].